Consider the following 45-residue polypeptide: Myotoxin-3 (45 aa).

Cystine bridges form between cysteine 4–cysteine 36, cysteine 11–cysteine 30, and cysteine 18–cysteine 37.

Monomer. Expressed by the venom gland.

The protein resides in the secreted. In terms of biological role, cationic peptide that possesses multiple functions. It acts as a cell-penetrating peptide (CPP), and as a potent voltage-gated potassium channel (Kv) inhibitor. It exhibits antimicrobial activities, hind limb paralysis, and severe muscle necrosis by a non-enzymatic mechanism. The chain is Myotoxin-3 from Crotalus viridis viridis (Prairie rattlesnake).